A 227-amino-acid polypeptide reads, in one-letter code: Small ribosomal subunit protein uS3 (227 aa).

Residues 39–108 (IRKFIEERYK…EVIVNVDEVK (70 aa)) enclose the KH type-2 domain.

This sequence belongs to the universal ribosomal protein uS3 family. Part of the 30S ribosomal subunit. Forms a tight complex with proteins S10 and S14.

Binds the lower part of the 30S subunit head. Binds mRNA in the 70S ribosome, positioning it for translation. In Sulfurihydrogenibium sp. (strain YO3AOP1), this protein is Small ribosomal subunit protein uS3.